Reading from the N-terminus, the 274-residue chain is 3',5'-cyclic adenosine monophosphate phosphodiesterase CpdA (274 aa).

Asp-21, His-23, Asp-63, Asn-93, His-163, His-202, and His-204 together coordinate Fe cation. Residues His-23, Asp-63, and 93–94 (NH) each bind AMP. His-204 provides a ligand contact to AMP.

The protein belongs to the cyclic nucleotide phosphodiesterase class-III family. The cofactor is Fe(2+).

The enzyme catalyses 3',5'-cyclic AMP + H2O = AMP + H(+). In terms of biological role, hydrolyzes cAMP to 5'-AMP. Plays an important regulatory role in modulating the intracellular concentration of cAMP, thereby influencing cAMP-dependent processes. May coordinate responses to nutritional stress, ensuring optimal competence development. In Haemophilus influenzae (strain ATCC 51907 / DSM 11121 / KW20 / Rd), this protein is 3',5'-cyclic adenosine monophosphate phosphodiesterase CpdA.